Reading from the N-terminus, the 156-residue chain is Acyl carrier protein, mitochondrial (156 aa).

The N-terminal 68 residues, 1–68, are a transit peptide targeting the mitochondrion; sequence MASRVLCACV…GTVTHLCRQY (68 aa). One can recognise a Carrier domain in the interval 77 to 152; that stretch reads DGIKDRVLYV…EIVDYIADKK (76 aa). N6-acetyllysine is present on lysine 88. Serine 112 is modified (O-(pantetheine 4'-phosphoryl)serine).

It belongs to the acyl carrier protein (ACP) family. As to quaternary structure, mammalian complex I is composed of 45 different subunits. Interacts with ETFRF1. Identified in a complex composed of MALSU1, MIEF1 upstream open reading frame protein and NDUFAB1; within the trimeric complex, MIEF1 upstream open reading frame protein functions as a bridging scaffold that interacts with MALSU1 on one side, and with NDUFAB1 on the other side. The complex interacts with the mitochondrial large ribosomal subunit. Interacts with alpha-1-microglobulin chain; this interaction is required for the maintenance of mitochondrial redox homeostasis. Component of the mitochondrial core iron-sulfur cluster (ISC) complex composed of NFS1, LYRM4, NDUFAB1, ISCU, FXN, and FDX2; this complex is a heterohexamer containing two copies of each monomer. Component of the cyteine desulfurase complex composed of NFS1, LYRM4 and NDUFAB1; this complex contributes to the stability and cysteine desulfurase activity of NFS1. In terms of processing, phosphopantetheinylation at Ser-112 is essential for interactions with LYR motif-containing proteins.

The protein localises to the mitochondrion. Carrier of the growing fatty acid chain in fatty acid biosynthesis. Accessory and non-catalytic subunit of the mitochondrial membrane respiratory chain NADH dehydrogenase (Complex I), which functions in the transfer of electrons from NADH to the respiratory chain. Accessory protein, of the core iron-sulfur cluster (ISC) assembly complex, that regulates, in association with LYRM4, the stability and the cysteine desulfurase activity of NFS1 and participates in the [2Fe-2S] clusters assembly on the scaffolding protein ISCU. The core iron-sulfur cluster (ISC) assembly complex is involved in the de novo synthesis of a [2Fe-2S] cluster, the first step of the mitochondrial iron-sulfur protein biogenesis. This process is initiated by the cysteine desulfurase complex (NFS1:LYRM4:NDUFAB1) that produces persulfide which is delivered on the scaffold protein ISCU in a FXN-dependent manner. Then this complex is stabilized by FDX2 which provides reducing equivalents to accomplish the [2Fe-2S] cluster assembly. Finally, the [2Fe-2S] cluster is transferred from ISCU to chaperone proteins, including HSCB, HSPA9 and GLRX5. The polypeptide is Acyl carrier protein, mitochondrial (Mus musculus (Mouse)).